Consider the following 30-residue polypeptide: Arsenate respiratory reductase iron-sulfur subunit ArrB (30 aa).

[4Fe-4S] cluster is bound by residues Cys-12, Cys-15, Cys-18, and Cys-22.

In terms of assembly, heterodimer composed of one large subunit (ArrA) and one small subunit (ArrB). Requires [4Fe-4S] cluster as cofactor.

It is found in the periplasm. In terms of biological role, component of the arsenate respiratory reductase (Arr) complex, which catalyzes the reduction of arsenate (As(V)) to arsenite (As(III)). ArrB is probably the electron transfer subunit. The sequence is that of Arsenate respiratory reductase iron-sulfur subunit ArrB from Chrysiogenes arsenatis.